A 274-amino-acid chain; its full sequence is Large ribosomal subunit protein uL2cz/uL2cy (274 aa).

Disordered stretches follow at residues 1-21 and 224-274; these read MAIH…VDSQ and NPVD…RRSK.

Belongs to the universal ribosomal protein uL2 family. Part of the 50S ribosomal subunit.

It localises to the plastid. The protein resides in the chloroplast. The polypeptide is Large ribosomal subunit protein uL2cz/uL2cy (rpl2-A) (Populus trichocarpa (Western balsam poplar)).